Reading from the N-terminus, the 82-residue chain is Small ribosomal subunit protein bS16 (82 aa).

Belongs to the bacterial ribosomal protein bS16 family.

The protein is Small ribosomal subunit protein bS16 of Shigella boydii serotype 18 (strain CDC 3083-94 / BS512).